The primary structure comprises 127 residues: I-Kappa-B like protein J1 (127 aa).

ANK repeat units follow at residues 43–76 (HGNT…DLDE) and 81–111 (DGDT…RFGS).

The protein belongs to the polydnaviridae I-Kappa-B-like protein family.

Its function is as follows. Suppresses the host immune response through NF-kappa-B inactivation. Possesses ankyrin repeat domains required for NF-kappa-B binding but lacks the regulatory regions required for dissociation from NF-kappa-B and degradation. Therefore, prevents host NF-kappa-B release and subsequent activation. The chain is I-Kappa-B like protein J1 (J2) from Microplitis demolitor (Parasitoid wasp).